A 178-amino-acid chain; its full sequence is Probetacellulin (178 aa).

A signal peptide spans 1–31 (MDRAARCSGASSLPLLLALALGLVILHCVVA). The Extracellular segment spans residues 32-118 (DGNSTRSPET…LFYLRGDRGQ (87 aa)). N-linked (GlcNAc...) asparagine glycosylation is present at N34. Positions 65–105 (HFSRCPKQYKHYCIKGRCRFVVAEQTPSCVCDEGYIGARCE) constitute an EGF-like domain. Intrachain disulfides connect C69–C82, C77–C93, and C95–C104. A propeptide spans 112–178 (LRGDRGQILV…NEDIEETNIA (67 aa)) (removed in mature form). A helical transmembrane segment spans residues 119 to 139 (ILVICLIAVMVVFIILVIGVC). Residues 140–178 (TCCHPLRKRRKRKKKEEEMETLGKDITPINEDIEETNIA) lie on the Cytoplasmic side of the membrane.

In terms of assembly, monomer. Interacts with EGFR and ERBB4. As to expression, synthesized in several tissues and tumor cells. Predominantly expressed in pancreas and small intestine.

Its subcellular location is the secreted. It localises to the extracellular space. It is found in the cell membrane. In terms of biological role, growth factor that binds to EGFR, ERBB4 and other EGF receptor family members. Potent mitogen for retinal pigment epithelial cells and vascular smooth muscle cells. In Homo sapiens (Human), this protein is Probetacellulin (BTC).